We begin with the raw amino-acid sequence, 161 residues long: Small ribosomal subunit protein uS19 (161 aa).

Positions 1–19 are enriched in basic residues; that stretch reads MARQKKYSGKGGARKKNKQ. The segment at 1-26 is disordered; it reads MARQKKYSGKGGARKKNKQKQSVAPR.

Belongs to the universal ribosomal protein uS19 family.

Protein S19 forms a complex with S13 that binds strongly to the 16S ribosomal RNA. The protein is Small ribosomal subunit protein uS19 of Methanococcus maripaludis (strain C6 / ATCC BAA-1332).